The following is a 122-amino-acid chain: Small ribosomal subunit protein bS6 (122 aa).

Residues 97-122 (TAPSPMMKAVQKEDAAKSHRAEAPAA) are disordered. Basic and acidic residues predominate over residues 106–122 (VQKEDAAKSHRAEAPAA).

The protein belongs to the bacterial ribosomal protein bS6 family.

In terms of biological role, binds together with bS18 to 16S ribosomal RNA. This is Small ribosomal subunit protein bS6 from Janthinobacterium sp. (strain Marseille) (Minibacterium massiliensis).